We begin with the raw amino-acid sequence, 170 residues long: Putative 5'(3')-deoxyribonucleotidase (170 aa).

The active-site Nucleophile is Asp-28. Residues Asp-28, Asp-30, and Asp-134 each coordinate Mg(2+). The active-site Proton donor is Asp-30.

This sequence belongs to the 5'(3')-deoxyribonucleotidase family. Mg(2+) is required as a cofactor.

Dephosphorylates the 5' and 2'(3')-phosphates of deoxyribonucleotides. This is Putative 5'(3')-deoxyribonucleotidase from Vibrio parahaemolyticus (KVP40).